Consider the following 193-residue polypeptide: Potassium-transporting ATPase KdpC subunit (193 aa).

The helical transmembrane segment at 7–27 threads the bilayer; it reads PALVLFAALTLLTGVAYPLAV.

The protein belongs to the KdpC family. As to quaternary structure, the system is composed of three essential subunits: KdpA, KdpB and KdpC.

Its subcellular location is the cell inner membrane. Its function is as follows. Part of the high-affinity ATP-driven potassium transport (or Kdp) system, which catalyzes the hydrolysis of ATP coupled with the electrogenic transport of potassium into the cytoplasm. This subunit acts as a catalytic chaperone that increases the ATP-binding affinity of the ATP-hydrolyzing subunit KdpB by the formation of a transient KdpB/KdpC/ATP ternary complex. In Rhodospirillum rubrum (strain ATCC 11170 / ATH 1.1.1 / DSM 467 / LMG 4362 / NCIMB 8255 / S1), this protein is Potassium-transporting ATPase KdpC subunit.